Reading from the N-terminus, the 1354-residue chain is Rho-associated protein kinase 1 (1354 aa).

An N-acetylserine modification is found at Ser-2. Residues 76-338 form the Protein kinase domain; the sequence is YEVVKVIGRG…VEEIKRHLFF (263 aa). ATP-binding positions include 82 to 90 and Lys-105; that span reads IGRGAFGEV. The active-site Proton acceptor is Asp-198. An AGC-kinase C-terminal domain is found at 341–409; sequence DQWAWETLRD…YSNRRYLSPA (69 aa). An interaction with FHOD1 region spans residues 368-727; that stretch reads FDDLEEDKGD…KKLKEEREAR (360 aa). Positions 422-692 form a coiled coil; it reads KSLQENLQKT…RLEQEVNEHK (271 aa). Positions 479 to 556 constitute an REM-1 domain; it reads STVSQIEKEK…LEEANDLLRT (78 aa). Positions 707–946 are SHROOM3 binding; it reads EAKSVAMCEM…AVSRLEETNS (240 aa). Residues 949–1015 enclose the RhoBD domain; that stretch reads TKDIELLRKE…LAEIMNRKDF (67 aa). Residues 998 to 1010 form an RHOA binding region; that stretch reads LKTQAVNKLAEIM. A coiled-coil region spans residues 1011–1102; that stretch reads NRKDFKIDKK…KLSDLSDSTS (92 aa). Residues 1101–1120 are disordered; it reads TSVASFPSADETDPNLPESR. Ser-1105 and Ser-1108 each carry phosphoserine. An auto-inhibitory region spans residues 1115–1354; that stretch reads NLPESRIEGW…VVKNTSGKTS (240 aa). The 200-residue stretch at 1118-1317 folds into the PH domain; the sequence is ESRIEGWLSV…WVTHLVKKIP (200 aa). A Phorbol-ester/DAG-type zinc finger spans residues 1228 to 1283; it reads GHEFIPTLYHFPANCEACAKPLWHVFKPPPALECRRCHVKCHRDHLDKKEDLISPC. The residue at position 1328 (Ser-1328) is a Phosphoserine. Positions 1333-1354 are disordered; sequence STRSTANQSFRKVVKNTSGKTS.

This sequence belongs to the protein kinase superfamily. AGC Ser/Thr protein kinase family. As to quaternary structure, homodimer. Interacts with RHOA (activated by GTP), RHOB, RHOC, GEM, MYLC2B, RHOE, PPP1R12A, LIMK1, LIMK2, TSG101, CHORDC1, DAPK3, PFN1, PTEN and JIP3. Interacts with FHOD1 in a Src-dependent manner. Interacts with ITGB1BP1 (via N-terminus and PTB domain). Interacts with SHROOM3. It depends on Mg(2+) as a cofactor. Autophosphorylated on serine and threonine residues. In terms of processing, cleaved by caspase-3 during apoptosis. This leads to constitutive activation of the kinase and membrane blebbing. In terms of tissue distribution, detected in corneal epithelium.

The protein resides in the cytoplasm. The protein localises to the cytoskeleton. Its subcellular location is the microtubule organizing center. It is found in the centrosome. It localises to the centriole. The protein resides in the golgi apparatus membrane. The protein localises to the cell projection. Its subcellular location is the bleb. It is found in the cell membrane. It localises to the lamellipodium. The protein resides in the ruffle. It carries out the reaction L-seryl-[protein] + ATP = O-phospho-L-seryl-[protein] + ADP + H(+). It catalyses the reaction L-threonyl-[protein] + ATP = O-phospho-L-threonyl-[protein] + ADP + H(+). With respect to regulation, activated by RHOA binding. Inhibited by Y-27632. Protein kinase which is a key regulator of the actin cytoskeleton and cell polarity. Involved in regulation of smooth muscle contraction, actin cytoskeleton organization, stress fiber and focal adhesion formation, neurite retraction, cell adhesion and motility via phosphorylation of DAPK3, GFAP, LIMK1, LIMK2, MYL9/MLC2, TPPP, PFN1 and PPP1R12A. Phosphorylates FHOD1 and acts synergistically with it to promote SRC-dependent non-apoptotic plasma membrane blebbing. Phosphorylates JIP3 and regulates the recruitment of JNK to JIP3 upon UVB-induced stress. Acts as a suppressor of inflammatory cell migration by regulating PTEN phosphorylation and stability. Acts as a negative regulator of VEGF-induced angiogenic endothelial cell activation. Required for centrosome positioning and centrosome-dependent exit from mitosis. Plays a role in terminal erythroid differentiation. Inhibits podocyte motility via regulation of actin cytoskeletal dynamics and phosphorylation of CFL1. Promotes keratinocyte terminal differentiation. Involved in osteoblast compaction through the fibronectin fibrillogenesis cell-mediated matrix assembly process, essential for osteoblast mineralization. May regulate closure of the eyelids and ventral body wall by inducing the assembly of actomyosin bundles. This is Rho-associated protein kinase 1 (ROCK1) from Oryctolagus cuniculus (Rabbit).